A 413-amino-acid chain; its full sequence is Histidinol-phosphate aminotransferase, chloroplastic (413 aa).

Residues 1–35 (MGVIELCNTSSICIGRANPSCCSIERNQRRRIICM) constitute a chloroplast transit peptide. K273 is modified (N6-(pyridoxal phosphate)lysine).

It belongs to the class-II pyridoxal-phosphate-dependent aminotransferase family. Histidinol-phosphate aminotransferase subfamily. As to quaternary structure, homodimer. Pyridoxal 5'-phosphate is required as a cofactor. As to expression, expressed in flowers, leaves, stems and roots.

It is found in the plastid. The protein resides in the chloroplast. The enzyme catalyses L-histidinol phosphate + 2-oxoglutarate = 3-(imidazol-4-yl)-2-oxopropyl phosphate + L-glutamate. It functions in the pathway amino-acid biosynthesis; L-histidine biosynthesis; L-histidine from 5-phospho-alpha-D-ribose 1-diphosphate: step 7/9. This Nicotiana plumbaginifolia (Leadwort-leaved tobacco) protein is Histidinol-phosphate aminotransferase, chloroplastic (HPA).